A 241-amino-acid polypeptide reads, in one-letter code: Small ribosomal subunit protein uS3 (241 aa).

A KH type-2 domain is found at 39 to 109 (IRQHVEKNLS…QIRINVIEVS (71 aa)). Residues 215-241 (EQAMAAPAPTPRKKRRPQQFEDRSNEE) are disordered. The segment covering 232–241 (QQFEDRSNEE) has biased composition (basic and acidic residues).

It belongs to the universal ribosomal protein uS3 family. As to quaternary structure, part of the 30S ribosomal subunit. Forms a tight complex with proteins S10 and S14.

Functionally, binds the lower part of the 30S subunit head. Binds mRNA in the 70S ribosome, positioning it for translation. The chain is Small ribosomal subunit protein uS3 from Crocosphaera subtropica (strain ATCC 51142 / BH68) (Cyanothece sp. (strain ATCC 51142)).